The following is a 231-amino-acid chain: Probable septum site-determining protein MinC (231 aa).

The tract at residues 101–125 (GKEKAPRPAPTPQAPAQNTTPVTKT) is disordered. Residues 114–123 (APAQNTTPVT) show a composition bias toward low complexity.

This sequence belongs to the MinC family. In terms of assembly, interacts with MinD and FtsZ.

Its function is as follows. Cell division inhibitor that blocks the formation of polar Z ring septums. Rapidly oscillates between the poles of the cell to destabilize FtsZ filaments that have formed before they mature into polar Z rings. Prevents FtsZ polymerization. In Escherichia coli (strain ATCC 8739 / DSM 1576 / NBRC 3972 / NCIMB 8545 / WDCM 00012 / Crooks), this protein is Probable septum site-determining protein MinC.